The primary structure comprises 105 residues: Putative pterin-4-alpha-carbinolamine dehydratase (105 aa).

Belongs to the pterin-4-alpha-carbinolamine dehydratase family.

The catalysed reaction is (4aS,6R)-4a-hydroxy-L-erythro-5,6,7,8-tetrahydrobiopterin = (6R)-L-erythro-6,7-dihydrobiopterin + H2O. The chain is Putative pterin-4-alpha-carbinolamine dehydratase from Sinorhizobium medicae (strain WSM419) (Ensifer medicae).